The following is a 440-amino-acid chain: Cytochrome c biogenesis protein Ccs1 (440 aa).

Transmembrane regions (helical) follow at residues Leu25–Ile45, Thr84–Ser104, and Leu170–Leu190.

This sequence belongs to the Ccs1/CcsB family. As to quaternary structure, may interact with CcsA.

Its subcellular location is the plastid. The protein localises to the chloroplast thylakoid membrane. In terms of biological role, required during biogenesis of c-type cytochromes (cytochrome c6 and cytochrome f) at the step of heme attachment. This is Cytochrome c biogenesis protein Ccs1 from Pyropia yezoensis (Susabi-nori).